The chain runs to 416 residues: Protein MID1-COMPLEMENTING ACTIVITY 2 (416 aa).

The stretch at 191–219 forms a coiled coil; sequence CEALKTEEEKLQLELQRSRARYDADQCEV. A helical membrane pass occupies residues 338–354; it reads LIVYSLILSCCCYTCCI.

In terms of tissue distribution, expressed in roots, leaves, stems, flowers and siliques. In the root, high levels of expression in vascular tissues, in the stele and endodermis, but no expression in the cortex, epidermis, root cap, promeristem and adjacent elongation zone of the primary root. Not expressed in root hairs. Detected in shoot apical meristem, leaf mesophyll cells and vascular tissues, upper half of inflorescence, but not in petioles of rosette leaves.

The protein localises to the cell membrane. With respect to regulation, inhibited by GdCl(3), but not by verapamil. Its function is as follows. Calcium-permeable stretch-activated channel component. Probably involved in mechanosensing and in mechano-stimulated calcium uptake mechanism. This chain is Protein MID1-COMPLEMENTING ACTIVITY 2 (MCA2), found in Arabidopsis thaliana (Mouse-ear cress).